Here is a 255-residue protein sequence, read N- to C-terminus: Probable transcriptional regulatory protein PCC8801_2028 (255 aa).

This sequence belongs to the TACO1 family.

Its subcellular location is the cytoplasm. The sequence is that of Probable transcriptional regulatory protein PCC8801_2028 from Rippkaea orientalis (strain PCC 8801 / RF-1) (Cyanothece sp. (strain PCC 8801)).